A 353-amino-acid polypeptide reads, in one-letter code: Photosystem II D2 protein (353 aa).

The residue at position 2 (Thr2) is an N-acetylthreonine. The residue at position 2 (Thr2) is a Phosphothreonine. The helical transmembrane segment at 41–61 (CAYFALGGWFTGTTFVTSWYT) threads the bilayer. Residue His118 coordinates chlorophyll a. A helical membrane pass occupies residues 125 to 141 (GFMLRQFELARSVQLRP). Positions 130 and 143 each coordinate pheophytin a. Residues 153–166 (VFVSVFLIYPLGQS) form a helical membrane-spanning segment. His198 lines the chlorophyll a pocket. Residues 208–228 (AALLCAIHGATVENTLFEDGD) form a helical membrane-spanning segment. A plastoquinone is bound by residues His215 and Phe262. Residue His215 coordinates Fe cation. Residue His269 participates in Fe cation binding. A helical transmembrane segment spans residues 279–295 (GLWMSAIGVVGLALNLR).

Belongs to the reaction center PufL/M/PsbA/D family. PSII is composed of 1 copy each of membrane proteins PsbA, PsbB, PsbC, PsbD, PsbE, PsbF, PsbH, PsbI, PsbJ, PsbK, PsbL, PsbM, PsbT, PsbX, PsbY, PsbZ, Psb30/Ycf12, at least 3 peripheral proteins of the oxygen-evolving complex and a large number of cofactors. It forms dimeric complexes. Requires The D1/D2 heterodimer binds P680, chlorophylls that are the primary electron donor of PSII, and subsequent electron acceptors. It shares a non-heme iron and each subunit binds pheophytin, quinone, additional chlorophylls, carotenoids and lipids. There is also a Cl(-1) ion associated with D1 and D2, which is required for oxygen evolution. The PSII complex binds additional chlorophylls, carotenoids and specific lipids. as cofactor.

It localises to the plastid. Its subcellular location is the chloroplast thylakoid membrane. It catalyses the reaction 2 a plastoquinone + 4 hnu + 2 H2O = 2 a plastoquinol + O2. Functionally, photosystem II (PSII) is a light-driven water:plastoquinone oxidoreductase that uses light energy to abstract electrons from H(2)O, generating O(2) and a proton gradient subsequently used for ATP formation. It consists of a core antenna complex that captures photons, and an electron transfer chain that converts photonic excitation into a charge separation. The D1/D2 (PsbA/PsbD) reaction center heterodimer binds P680, the primary electron donor of PSII as well as several subsequent electron acceptors. D2 is needed for assembly of a stable PSII complex. This Agrostis stolonifera (Creeping bentgrass) protein is Photosystem II D2 protein.